A 232-amino-acid chain; its full sequence is Phosphatidylserine decarboxylase proenzyme (232 aa).

The active-site Schiff-base intermediate with substrate; via pyruvic acid is the Ser-190. Ser-190 carries the pyruvic acid (Ser); by autocatalysis modification.

Belongs to the phosphatidylserine decarboxylase family. PSD-A subfamily. In terms of assembly, heterodimer of a large membrane-associated beta subunit and a small pyruvoyl-containing alpha subunit. The cofactor is pyruvate. In terms of processing, is synthesized initially as an inactive proenzyme. Formation of the active enzyme involves a self-maturation process in which the active site pyruvoyl group is generated from an internal serine residue via an autocatalytic post-translational modification. Two non-identical subunits are generated from the proenzyme in this reaction, and the pyruvate is formed at the N-terminus of the alpha chain, which is derived from the carboxyl end of the proenzyme. The post-translation cleavage follows an unusual pathway, termed non-hydrolytic serinolysis, in which the side chain hydroxyl group of the serine supplies its oxygen atom to form the C-terminus of the beta chain, while the remainder of the serine residue undergoes an oxidative deamination to produce ammonia and the pyruvoyl prosthetic group on the alpha chain.

The protein resides in the cell membrane. The enzyme catalyses a 1,2-diacyl-sn-glycero-3-phospho-L-serine + H(+) = a 1,2-diacyl-sn-glycero-3-phosphoethanolamine + CO2. It functions in the pathway phospholipid metabolism; phosphatidylethanolamine biosynthesis; phosphatidylethanolamine from CDP-diacylglycerol: step 2/2. Its function is as follows. Catalyzes the formation of phosphatidylethanolamine (PtdEtn) from phosphatidylserine (PtdSer). In Brucella anthropi (strain ATCC 49188 / DSM 6882 / CCUG 24695 / JCM 21032 / LMG 3331 / NBRC 15819 / NCTC 12168 / Alc 37) (Ochrobactrum anthropi), this protein is Phosphatidylserine decarboxylase proenzyme.